The following is a 638-amino-acid chain: MAKVIGIDLGTTNSCVSVMDGKDAKVIENSEGARTTPSMVAFSDDGERLVGQPAKRQAVTNPTNTLFAVKRLIGRRYEDPTVEKDKGLVPFPIIKGDNGDAWVEAQGKGYSPAQISAMILQKMKETAEAYLGEKVEKAVITVPAYFNDAQRQATKDAGRIAGLEVLRIINEPTAAALAYGLDKTEGKTIAVYDLGGGTFDISVLEIGDGVFEVKSTNGDTFLGGEDFDMRLVEYLAAEFKKEQGIELKNDKLALQRLKEAAEKAKIELSSSQQTEINLPFITADASGPKHLTMKLTRAKFENLVDDLVQRTVAPCKAALKDAGVTAADIDEVVLVGGMSRMPKVQEVVKQLFGKEPHKGVNPDEVVAMGAAIQAGVLQGDVKDVLLLDVTPLSLGIETLGGVFTRLIDRNTTIPTKKSQVFSTADDNQQAVTIRVSQGEREMAQDNKLLGQFDLVGLPPSPRGVPQIEVTFDIDANGIVQVSAKDKGTGKEQQIRIQASGGLSDADIEKMVKDAEANAEADKNRRAVVEAKNQAESLIHSTEKSVKDYGDKVSADDRKAIEDAIAALKSSIETSEPNAEDIQAKTQTLMEVSMKLGQAIYESQQAEGGAEGGPSGHHDDGIVDADYEEVKDDNTKKSA.

Phosphothreonine; by autocatalysis is present on T198. Residues 599-638 (IYESQQAEGGAEGGPSGHHDDGIVDADYEEVKDDNTKKSA) form a disordered region. Residues 621–630 (IVDADYEEVK) are compositionally biased toward acidic residues.

It belongs to the heat shock protein 70 family.

Acts as a chaperone. The sequence is that of Chaperone protein DnaK from Allorhizobium ampelinum (strain ATCC BAA-846 / DSM 112012 / S4) (Agrobacterium vitis (strain S4)).